Here is a 122-residue protein sequence, read N- to C-terminus: S-adenosylmethionine decarboxylase proenzyme (122 aa).

The Schiff-base intermediate with substrate; via pyruvic acid role is filled by S69. S69 carries the pyruvic acid (Ser); by autocatalysis modification. The active-site Proton acceptor; for processing activity is the H74. C89 functions as the Proton donor; for catalytic activity in the catalytic mechanism.

Belongs to the prokaryotic AdoMetDC family. Type 1 subfamily. Heterotetramer of two alpha and two beta chains arranged as a dimer of alpha/beta heterodimers. Pyruvate serves as cofactor. Is synthesized initially as an inactive proenzyme. Formation of the active enzyme involves a self-maturation process in which the active site pyruvoyl group is generated from an internal serine residue via an autocatalytic post-translational modification. Two non-identical subunits are generated from the proenzyme in this reaction, and the pyruvate is formed at the N-terminus of the alpha chain, which is derived from the carboxyl end of the proenzyme. The post-translation cleavage follows an unusual pathway, termed non-hydrolytic serinolysis, in which the side chain hydroxyl group of the serine supplies its oxygen atom to form the C-terminus of the beta chain, while the remainder of the serine residue undergoes an oxidative deamination to produce ammonia and the pyruvoyl group blocking the N-terminus of the alpha chain.

The catalysed reaction is S-adenosyl-L-methionine + H(+) = S-adenosyl 3-(methylsulfanyl)propylamine + CO2. It functions in the pathway amine and polyamine biosynthesis; S-adenosylmethioninamine biosynthesis; S-adenosylmethioninamine from S-adenosyl-L-methionine: step 1/1. Catalyzes the decarboxylation of S-adenosylmethionine to S-adenosylmethioninamine (dcAdoMet), the propylamine donor required for the synthesis of the polyamines spermine and spermidine from the diamine putrescine. The sequence is that of S-adenosylmethionine decarboxylase proenzyme from Saccharolobus islandicus (strain L.S.2.15 / Lassen #1) (Sulfolobus islandicus).